The sequence spans 475 residues: uncharacterized protein (475 aa).

To E.coli YihN.

This is an uncharacterized protein from Mycoplasma pneumoniae (strain ATCC 29342 / M129 / Subtype 1) (Mycoplasmoides pneumoniae).